The sequence spans 96 residues: 2Fe-2S ferredoxin-5 (96 aa).

The 95-residue stretch at 2–96 folds into the 2Fe-2S ferredoxin-type domain; sequence PKVIVANINA…GKGDVVIYLP (95 aa). Cysteine 36, cysteine 42, cysteine 45, and cysteine 81 together coordinate [2Fe-2S] cluster.

The protein belongs to the adrenodoxin/putidaredoxin family. Requires [2Fe-2S] cluster as cofactor.

May be involved in the assembly of iron-sulfur clusters (Isc-Fd). The protein is 2Fe-2S ferredoxin-5 (fdx5) of Aquifex aeolicus (strain VF5).